Here is a 490-residue protein sequence, read N- to C-terminus: Coagulation factor X (490 aa).

The first 20 residues, M1 to S20, serve as a signal peptide directing secretion. Residues G21–R40 constitute a propeptide that is removed on maturation. Residues A41–V85 form the Gla domain. 6 positions are modified to 4-carboxyglutamate: E46, E47, E54, E56, E59, and E60. C57 and C62 are oxidised to a cystine. N-linked (GlcNAc...) asparagine glycosylation is present at N61. A 4-carboxyglutamate mark is found at E65, E66, E69, E72, E75, and E79. In terms of domain architecture, EGF-like 1; calcium-binding spans D86–E122. Disulfide bonds link C90/C101, C95/C110, C112/C121, C129/C140, C136/C149, C151/C164, C172/C340, C239/C244, C259/C275, C388/C402, and C413/C441. D103 carries the (3R)-3-hydroxyaspartate modification. One can recognise an EGF-like 2 domain in the interval T125–I165. The tract at residues S183 to L230 is disordered. A propeptide spans P184 to R232 (activation peptide). 2 N-linked (GlcNAc...) asparagine glycosylation sites follow: N187 and N205. Over residues D203 to P212 the composition is skewed to polar residues. In terms of domain architecture, Peptidase S1 spans I233 to R465. Catalysis depends on charge relay system residues H274 and D320. S417 (charge relay system) is an active-site residue.

This sequence belongs to the peptidase S1 family. The two chains are formed from a single-chain precursor by the excision of two Arg residues and are held together by 1 or more disulfide bonds. Forms a heterodimer with SERPINA5. In terms of processing, the vitamin K-dependent, enzymatic carboxylation of some glutamate residues allows the modified protein to bind calcium. Post-translationally, N- and O-glycosylated. Proteolytically cleaved and activated by cathepsin CTSG. The activation peptide is cleaved by factor IXa (in the intrinsic pathway), or by factor VIIa (in the extrinsic pathway). In terms of processing, the iron and 2-oxoglutarate dependent 3-hydroxylation of aspartate and asparagine is (R) stereospecific within EGF domains.

The protein localises to the secreted. It catalyses the reaction Selective cleavage of Arg-|-Thr and then Arg-|-Ile bonds in prothrombin to form thrombin.. Inhibited by SERPINA5. Factor Xa is a vitamin K-dependent glycoprotein that converts prothrombin to thrombin in the presence of factor Va, calcium and phospholipid during blood clotting. Factor Xa activates pro-inflammatory signaling pathways in a protease-activated receptor (PAR)-dependent manner. The chain is Coagulation factor X (F10) from Oryctolagus cuniculus (Rabbit).